The chain runs to 126 residues: Small ribosomal subunit protein uS12 (126 aa).

A disordered region spans residues 1–28; the sequence is MPTINQLVRKGRQSETTKSKSPALQDCP. Asp89 bears the 3-methylthioaspartic acid mark. Positions 103-126 are disordered; the sequence is DTQGVKDRKQARSKYGAKRAKAGK. Residues 113 to 126 show a composition bias toward basic residues; it reads ARSKYGAKRAKAGK.

It belongs to the universal ribosomal protein uS12 family. Part of the 30S ribosomal subunit. Contacts proteins S8 and S17. May interact with IF1 in the 30S initiation complex.

In terms of biological role, with S4 and S5 plays an important role in translational accuracy. Its function is as follows. Interacts with and stabilizes bases of the 16S rRNA that are involved in tRNA selection in the A site and with the mRNA backbone. Located at the interface of the 30S and 50S subunits, it traverses the body of the 30S subunit contacting proteins on the other side and probably holding the rRNA structure together. The combined cluster of proteins S8, S12 and S17 appears to hold together the shoulder and platform of the 30S subunit. This chain is Small ribosomal subunit protein uS12, found in Paraburkholderia phytofirmans (strain DSM 17436 / LMG 22146 / PsJN) (Burkholderia phytofirmans).